A 301-amino-acid polypeptide reads, in one-letter code: GTPase Era (301 aa).

In terms of domain architecture, Era-type G spans 4 to 173; the sequence is KAGFVALIGK…LECISKHLIP (170 aa). Residues 12 to 19 are G1; it reads GKPNAGKS. 12–19 provides a ligand contact to GTP; sequence GKPNAGKS. Residues 38–42 form a G2 region; sequence NATRK. Residues 64-67 form a G3 region; it reads DTPG. Residues 64-68 and 122-125 each bind GTP; these read DTPGL and SKID. Positions 122–125 are G4; that stretch reads SKID. The segment at 152–154 is G5; that stretch reads LSA. Residues 204 to 280 form the KH type-2 domain; sequence LSDEIPYESD…FLNLQVIAQK (77 aa).

It belongs to the TRAFAC class TrmE-Era-EngA-EngB-Septin-like GTPase superfamily. Era GTPase family. Monomer.

The protein localises to the cytoplasm. Its subcellular location is the cell inner membrane. In terms of biological role, an essential GTPase that binds both GDP and GTP, with rapid nucleotide exchange. Plays a role in 16S rRNA processing and 30S ribosomal subunit biogenesis and possibly also in cell cycle regulation and energy metabolism. The sequence is that of GTPase Era from Helicobacter pylori (strain HPAG1).